A 237-amino-acid polypeptide reads, in one-letter code: uncharacterized protein (237 aa).

50 to 57 (APPGTGKS) is an ATP binding site.

This is an uncharacterized protein from Escherichia coli (strain K12).